The chain runs to 334 residues: Ethanol acetyltransferase 1 (334 aa).

The N-terminal 16 residues, 1 to 16, are a transit peptide targeting the mitochondrion; it reads MFASNVVVLNKRSIRF. Active-site charge relay system residues include Ser-124, Asp-148, and His-296.

It belongs to the AB hydrolase superfamily.

The protein localises to the mitochondrion. The enzyme catalyses ethanol + acetyl-CoA = ethyl acetate + CoA. The catalysed reaction is acetyl-CoA + H2O = acetate + CoA + H(+). It carries out the reaction ethyl acetate + H2O = ethanol + acetate + H(+). Its function is as follows. Alcohol acetyltransferase that catalyzes the synthesis of ethyl acetate from ethanol and acetyl-CoA. Can also function as a thioesterase by hydrolyzing acetyl-CoA in the absence of ethanol, as well as esterase hydrolyzing ethyl acetate. The chain is Ethanol acetyltransferase 1 (EAT1) from Hanseniaspora uvarum (Yeast).